We begin with the raw amino-acid sequence, 169 residues long: Putative lipocalin R877 (169 aa).

The first 18 residues, Met-1 to Ser-18, serve as a signal peptide directing secretion.

The protein belongs to the calycin superfamily. Lipocalin family.

It is found in the secreted. The protein resides in the virion. Could play a role in the transport of a small ligand. The chain is Putative lipocalin R877 from Acanthamoeba polyphaga mimivirus (APMV).